Here is a 692-residue protein sequence, read N- to C-terminus: A-kinase anchor protein 8 (692 aa).

Residues 1–195 form an interaction with MCM2 region; sequence MDQGYGGYGA…FMRGRGQGRF (195 aa). The segment at 1–210 is interaction with DPY30; the sequence is MDQGYGGYGA…PGTFMRSDPF (210 aa). The residue at position 109 (Arg-109) is an Asymmetric dimethylarginine; alternate. Position 109 is an omega-N-methylarginine; alternate (Arg-109). Residues 109–201 form an interaction with DDX5 region; sequence RGGSGGGGEG…QGRFQDRSNP (93 aa). The residue at position 112 (Ser-112) is a Phosphoserine. Disordered regions lie at residues 168–203, 231–254, and 269–382; these read GQYS…NPGT, GGRG…SMAP, and STMP…RTRD. Positions 172 to 182 are enriched in basic and acidic residues; sequence ECRDPARERGS. The residue at position 199 (Ser-199) is a Phosphoserine. 2 positions are modified to omega-N-methylarginine: Arg-233 and Arg-277. Basic and acidic residues-rich tracts occupy residues 281–297 and 314–323; these read RMRD…DRFG and PDTKLARVDS. Positions 289–306 match the Bipartite nuclear localization signal motif; that stretch reads KRRGFDRFGPDGTGRKRK. Lys-317 is covalently cross-linked (Glycyl lysine isopeptide (Lys-Gly) (interchain with G-Cter in SUMO2)). Ser-323, Ser-328, and Ser-339 each carry phosphoserine. The segment covering 324 to 334 has biased composition (acidic residues); it reads EGDFSENDDAA. Residues 387–450 form an involved in chromatin-binding region; it reads RIQFACSVCK…NKKIEKRRQE (64 aa). C2H2 AKAP95-type zinc fingers lie at residues 392–414 and 481–504; these read CSVC…SKFH and CLAC…SVDH. Residues 525–569 are involved in condensin complex recruitment; that stretch reads SVLNNRHIVKMLEKYLKGEDPFTSETVDPEMEGDDNLGGEDKKET. Positions 545-571 are disordered; that stretch reads PFTSETVDPEMEGDDNLGGEDKKETPE. Positions 551 to 562 are enriched in acidic residues; sequence VDPEMEGDDNLG. A Glycyl lysine isopeptide (Lys-Gly) (interchain with G-Cter in SUMO2) cross-link involves residue Lys-567. Residues 572–589 are RII-binding; it reads EVAADVLAEVITAAVRAV. Positions 576 to 593 are required for interaction with MYCBP; it reads DVLAEVITAAVRAVDGEG. The disordered stretch occupies residues 592 to 692; sequence EGAPAPESSG…AESKDAVPTE (101 aa). Basic and acidic residues predominate over residues 634 to 646; it reads AHEKGVPKARSEA. Phosphoserine is present on Ser-662. The segment covering 663–675 has biased composition (low complexity); it reads AQTRVAPAPAAAD. Positions 683 to 692 are enriched in basic and acidic residues; the sequence is AESKDAVPTE. The residue at position 685 (Ser-685) is a Phosphoserine.

The protein belongs to the AKAP95 family. Binds to the PKA RII-alpha regulatory subunit PRKAR2A (phosphorylated at 'Thr-54') during mitosis. Interacts (via C-terminus) with FIGN. Interacts with NCAPD2, CCND1, MCM2, RPS6KA1, PDE4A. Interacts with CCND3, CCNE1, DDX5, CASP3. Interacts with NFKB1; detetcted in the cytoplasm. Interacts with MYCBP; MYCBP is translocated to the nucleus and the interaction prevents the association of the PKA catalytic subunit leading to suppression of PKA activity. Interacts with DPY30; mediating AKAP8 association with at least the MLL4/WBP7 HMT complex. Interacts with HDAC3; increased during mitosis. Interacts with GJA1; in the nucleus and in the nuclear membrane; the nuclear association increases with progress of cell cycle G1, S and G2 phase and decreases in M phase. Phosphorylated on tyrosine residues probably by SRC subfamily protein kinases; multiple phosphorylation is leading to dissociation from nuclear structures implicated in chromatin structural changes. Highly expressed in heart, liver, skeletal muscle, kidney and pancreas. Expressed in mature dendritic cells.

The protein resides in the nucleus. Its subcellular location is the nucleus matrix. It is found in the nucleolus. It localises to the cytoplasm. Functionally, anchoring protein that mediates the subcellular compartmentation of cAMP-dependent protein kinase (PKA type II). Acts as an anchor for a PKA-signaling complex onto mitotic chromosomes, which is required for maintenance of chromosomes in a condensed form throughout mitosis. Recruits condensin complex subunit NCAPD2 to chromosomes required for chromatin condensation; the function appears to be independent from PKA-anchoring. May help to deliver cyclin D/E to CDK4 to facilitate cell cycle progression. Required for cell cycle G2/M transition and histone deacetylation during mitosis. In mitotic cells recruits HDAC3 to the vicinity of chromatin leading to deacetylation and subsequent phosphorylation at 'Ser-10' of histone H3; in this function may act redundantly with AKAP8L. Involved in nuclear retention of RPS6KA1 upon ERK activation thus inducing cell proliferation. May be involved in regulation of DNA replication by acting as scaffold for MCM2. Enhances HMT activity of the KMT2 family MLL4/WBP7 complex and is involved in transcriptional regulation. In a teratocarcinoma cell line is involved in retinoic acid-mediated induction of developmental genes implicating H3 'Lys-4' methylation. May be involved in recruitment of active CASP3 to the nucleus in apoptotic cells. May act as a carrier protein of GJA1 for its transport to the nucleus. May play a repressive role in the regulation of rDNA transcription. Preferentially binds GC-rich DNA in vitro. In cells, associates with ribosomal RNA (rRNA) chromatin, preferentially with rRNA promoter and transcribed regions. Involved in modulation of Toll-like receptor signaling. Required for the cAMP-dependent suppression of TNF-alpha in early stages of LPS-induced macrophage activation; the function probably implicates targeting of PKA to NFKB1. The protein is A-kinase anchor protein 8 (AKAP8) of Homo sapiens (Human).